Consider the following 963-residue polypeptide: Protein NLP2 (963 aa).

Residues 635–716 (RRPGEKRRTK…IDSVQGVQGS (82 aa)) enclose the RWP-RK domain. Over residues 734–755 (MSGTGTSFKNPNAQTENGVSAQ) the composition is skewed to polar residues. Residues 734 to 794 (MSGTGTSFKN…QSTNTGTTSN (61 aa)) are disordered. Over residues 756-794 (GTAAAPKSPPSSSCSHSSGSSTCCSTGANQSTNTGTTSN) the composition is skewed to low complexity. A PB1 domain is found at 862-945 (ASKVKATFGE…RTIKISVHEA (84 aa)).

The protein resides in the nucleus. Probable transcription factor. This chain is Protein NLP2 (NLP2), found in Arabidopsis thaliana (Mouse-ear cress).